Reading from the N-terminus, the 148-residue chain is Large ribosomal subunit protein bL9 (148 aa).

This sequence belongs to the bacterial ribosomal protein bL9 family.

Binds to the 23S rRNA. The sequence is that of Large ribosomal subunit protein bL9 from Acinetobacter baumannii (strain AB307-0294).